The sequence spans 518 residues: U3 small nucleolar RNA-associated protein 15 homolog (518 aa).

Ala-2 bears the N-acetylalanine mark. WD repeat units lie at residues 36 to 75 (KEFG…PIKT), 78 to 117 (RFKD…PLRQ), 120 to 159 (GHTK…EILT), 162 to 202 (EHSD…SVLS), 204 to 242 (EHGQ…QLLV), 246 to 285 (NHHK…VVHS), and 287 to 326 (DYAA…KKES). Residue Lys-249 forms a Glycyl lysine isopeptide (Lys-Gly) (interchain with G-Cter in SUMO2) linkage.

In terms of assembly, part of the small subunit (SSU) processome, composed of more than 70 proteins and the RNA chaperone small nucleolar RNA (snoRNA) U3. May be a component of the proposed t-UTP subcomplex of the ribosomal small subunit (SSU) processome containing at least UTP4, WDR43, HEATR1, UTP15, WDR75. Interacts directly with UTP4 and WDR43.

It localises to the nucleus. The protein localises to the nucleolus. Its function is as follows. Ribosome biogenesis factor. Involved in nucleolar processing of pre-18S ribosomal RNA. Required for optimal pre-ribosomal RNA transcription by RNA polymerase I. Part of the small subunit (SSU) processome, first precursor of the small eukaryotic ribosomal subunit. During the assembly of the SSU processome in the nucleolus, many ribosome biogenesis factors, an RNA chaperone and ribosomal proteins associate with the nascent pre-rRNA and work in concert to generate RNA folding, modifications, rearrangements and cleavage as well as targeted degradation of pre-ribosomal RNA by the RNA exosome. The polypeptide is U3 small nucleolar RNA-associated protein 15 homolog (Homo sapiens (Human)).